The sequence spans 332 residues: Ketol-acid reductoisomerase (NADP(+)) (332 aa).

One can recognise a KARI N-terminal Rossmann domain in the interval 2–182; it reads AKIYTDKDVS…GATRAGVIET (181 aa). NADP(+)-binding positions include 25-28, S53, and 83-86; these read YGSQ and DMIQ. H108 is a catalytic residue. G134 is a binding site for NADP(+). One can recognise a KARI C-terminal knotted domain in the interval 183 to 328; sequence TFKEETETDL…RSLRDIILRG (146 aa). Mg(2+)-binding residues include D191, E195, E227, and E231. S252 is a substrate binding site.

Belongs to the ketol-acid reductoisomerase family. The cofactor is Mg(2+).

The catalysed reaction is (2R)-2,3-dihydroxy-3-methylbutanoate + NADP(+) = (2S)-2-acetolactate + NADPH + H(+). It catalyses the reaction (2R,3R)-2,3-dihydroxy-3-methylpentanoate + NADP(+) = (S)-2-ethyl-2-hydroxy-3-oxobutanoate + NADPH + H(+). It participates in amino-acid biosynthesis; L-isoleucine biosynthesis; L-isoleucine from 2-oxobutanoate: step 2/4. Its pathway is amino-acid biosynthesis; L-valine biosynthesis; L-valine from pyruvate: step 2/4. Functionally, involved in the biosynthesis of branched-chain amino acids (BCAA). Catalyzes an alkyl-migration followed by a ketol-acid reduction of (S)-2-acetolactate (S2AL) to yield (R)-2,3-dihydroxy-isovalerate. In the isomerase reaction, S2AL is rearranged via a Mg-dependent methyl migration to produce 3-hydroxy-3-methyl-2-ketobutyrate (HMKB). In the reductase reaction, this 2-ketoacid undergoes a metal-dependent reduction by NADPH to yield (R)-2,3-dihydroxy-isovalerate. In Sulfolobus acidocaldarius (strain ATCC 33909 / DSM 639 / JCM 8929 / NBRC 15157 / NCIMB 11770), this protein is Ketol-acid reductoisomerase (NADP(+)).